A 1034-amino-acid polypeptide reads, in one-letter code: Isoleucine--tRNA ligase (1034 aa).

The short motif at 48-58 is the 'HIGH' region element; it reads PTANGKPHIGH. A 'KMSKS' region motif is present at residues 588-592; that stretch reads KMSKH. An ATP-binding site is contributed by Lys-591.

This sequence belongs to the class-I aminoacyl-tRNA synthetase family. IleS type 2 subfamily. As to quaternary structure, monomer. Zn(2+) is required as a cofactor.

It localises to the cytoplasm. The enzyme catalyses tRNA(Ile) + L-isoleucine + ATP = L-isoleucyl-tRNA(Ile) + AMP + diphosphate. Catalyzes the attachment of isoleucine to tRNA(Ile). As IleRS can inadvertently accommodate and process structurally similar amino acids such as valine, to avoid such errors it has two additional distinct tRNA(Ile)-dependent editing activities. One activity is designated as 'pretransfer' editing and involves the hydrolysis of activated Val-AMP. The other activity is designated 'posttransfer' editing and involves deacylation of mischarged Val-tRNA(Ile). This chain is Isoleucine--tRNA ligase, found in Clostridium kluyveri (strain ATCC 8527 / DSM 555 / NBRC 12016 / NCIMB 10680 / K1).